A 282-amino-acid chain; its full sequence is Tyrosine recombinase XerA (282 aa).

The Core-binding (CB) domain occupies 2–79 (EAINEVIEEY…ALRSYFRFEG (78 aa)). Residues 95 to 271 (SLPKSLTREE…TVEHLRKAQE (177 aa)) enclose the Tyr recombinase domain. Residues R132, K157, H223, R226, and H249 contribute to the active site. Y258 (O-(3'-phospho-DNA)-tyrosine intermediate) is an active-site residue.

Belongs to the 'phage' integrase family. XerA subfamily.

It localises to the cytoplasm. Site-specific tyrosine recombinase, which acts by catalyzing the cutting and rejoining of the recombining DNA molecules. The chain is Tyrosine recombinase XerA from Thermococcus onnurineus (strain NA1).